Reading from the N-terminus, the 245-residue chain is METVNTAIQPEKTRRRVLLKLSGEVIGGGKLGVDPETVRAIAKQIAAAVTEVEVAIVVGGGNFFRGAELSQSGMDRSRADYMGMLGTVMNCLALQDFLEQAGVETRVQSAITMGQVAEAYIPRRAIRHMEKGRVVIFGAGAGLPYFSTDTVAAQRALEVHADVVLMAKSGVDGVYTADPKKDPTAEKLDVLSYDDALRRDIRVMDQTAMTMCKDNSLSMVVFGMEGEGNVTRAILGETLGTLVTP.

20–23 (KLSG) is a binding site for ATP. Position 60 (Gly-60) interacts with UMP. 2 residues coordinate ATP: Gly-61 and Arg-65. UMP contacts are provided by residues Asp-80 and 141–148 (AGLPYFST). ATP-binding residues include Tyr-175 and Asp-178.

It belongs to the UMP kinase family. In terms of assembly, homohexamer.

The protein localises to the cytoplasm. It carries out the reaction UMP + ATP = UDP + ADP. The protein operates within pyrimidine metabolism; CTP biosynthesis via de novo pathway; UDP from UMP (UMPK route): step 1/1. Inhibited by UTP. Its function is as follows. Catalyzes the reversible phosphorylation of UMP to UDP. This chain is Uridylate kinase, found in Paenarthrobacter aurescens (strain TC1).